The following is a 207-amino-acid chain: MPLPDFRLIRLLPLAALVLTACSVTTPKGPGKSPDSPQWRQHQQDVRNLNQYQTRGAFAYISDQQKVYARFFWQQTGQDRYRLLLTNPLGSTELELNAQPGNVQLVDNKGQRYTSDDAEEMIGKLTGMPIPLNSLRQWILGLPGDATDYKLDDQYRLSEITYSQNGKNWKVVYGGYDTKTQPAMPANMELTDGGQRIKLKMDNWVVK.

The N-terminal stretch at 1 to 21 (MPLPDFRLIRLLPLAALVLTA) is a signal peptide. Cysteine 22 is lipidated: N-palmitoyl cysteine. A lipid anchor (S-diacylglycerol cysteine) is attached at cysteine 22.

This sequence belongs to the LolB family. As to quaternary structure, monomer.

Its subcellular location is the cell outer membrane. Its function is as follows. Plays a critical role in the incorporation of lipoproteins in the outer membrane after they are released by the LolA protein. The protein is Outer-membrane lipoprotein LolB of Escherichia coli O127:H6 (strain E2348/69 / EPEC).